The sequence spans 351 residues: Polyribonucleotide 5'-hydroxyl-kinase TK1956 (351 aa).

Residue 34 to 41 coordinates ATP; it reads GGVDSGKS.

Requires a divalent metal cation as cofactor.

The enzyme catalyses a 5'-end dephospho-2'-deoxyribonucleoside-DNA + ATP = a 5'-end 5'-phospho-2'-deoxyribonucleoside-DNA + ADP + H(+). It carries out the reaction a 5'-end dephospho-ribonucleoside-RNA + ATP = a 5'-end 5'-phospho-ribonucleoside-RNA + ADP + H(+). Its function is as follows. Polynucleotide kinase that can phosphorylate the 5'-hydroxyl groups of both single-stranded RNA (ssRNA) and single-stranded DNA (ssDNA). Exhibits a strong preference for ssRNA. This Thermococcus kodakarensis (strain ATCC BAA-918 / JCM 12380 / KOD1) (Pyrococcus kodakaraensis (strain KOD1)) protein is Polyribonucleotide 5'-hydroxyl-kinase TK1956.